Here is a 127-residue protein sequence, read N- to C-terminus: MKKSGLLNPQLCAAVARLGHTQTFVVADAGLPIPHEVPVIDLAVVLGTPRFQEVFDAILDEVVVDGATIAHEALGHEPESWVRERIEEVHTVSHEDLKKALPNVSFVVRTGETTPYSNVIVRCGVPF.

The active-site Proton donor is His20. Substrate-binding positions include Asp28, His94, and 116–118 (YSN).

Belongs to the RbsD / FucU family. RbsD subfamily. Homodecamer.

It localises to the cytoplasm. It catalyses the reaction beta-D-ribopyranose = beta-D-ribofuranose. The protein operates within carbohydrate metabolism; D-ribose degradation; D-ribose 5-phosphate from beta-D-ribopyranose: step 1/2. Its function is as follows. Catalyzes the interconversion of beta-pyran and beta-furan forms of D-ribose. This chain is D-ribose pyranase, found in Cutibacterium acnes (strain DSM 16379 / KPA171202) (Propionibacterium acnes).